Consider the following 210-residue polypeptide: FMN-dependent NADH:quinone oxidoreductase 9 (210 aa).

FMN is bound by residues S10 and 16-18 (SAS).

This sequence belongs to the azoreductase type 1 family. Homodimer. FMN is required as a cofactor.

The enzyme catalyses 2 a quinone + NADH + H(+) = 2 a 1,4-benzosemiquinone + NAD(+). It catalyses the reaction N,N-dimethyl-1,4-phenylenediamine + anthranilate + 2 NAD(+) = 2-(4-dimethylaminophenyl)diazenylbenzoate + 2 NADH + 2 H(+). Its function is as follows. Quinone reductase that provides resistance to thiol-specific stress caused by electrophilic quinones. In terms of biological role, also exhibits azoreductase activity. Catalyzes the reductive cleavage of the azo bond in aromatic azo compounds to the corresponding amines. This is FMN-dependent NADH:quinone oxidoreductase 9 from Burkholderia lata (strain ATCC 17760 / DSM 23089 / LMG 22485 / NCIMB 9086 / R18194 / 383).